The primary structure comprises 604 residues: Protein CBFA2T1 (604 aa).

Residues 32 to 114 are disordered; it reads TEKHSTMPDS…SSSSLANQQL (83 aa). Phosphoserine is present on Ser-41. Positions 63 to 86 are enriched in polar residues; the sequence is QGAPRTSSFTPTTLTNGTSHSPTA. Residues 95–114 are compositionally biased toward low complexity; it reads NGFSNGPSSSSSSSLANQQL. The TAFH domain occupies 120–215; sequence ARQLSKLKRF…NPAQYLAQHE (96 aa). The tract at residues 230 to 298 is disordered; sequence SELLLDVNEN…LPHPTPPPPQ (69 aa). Residues 238–264 show a composition bias toward basic and acidic residues; it reads ENGKRRTPDRTKENGFDREPLHSEHPS. Residues 271 to 285 are compositionally biased toward polar residues; it reads SPGQRYSPNNGLSYQ. Residues 289–298 show a composition bias toward pro residues; that stretch reads LPHPTPPPPQ. An important for oligomerization region spans residues 337 to 383; that stretch reads QEEMIDHRLTDREWAEEWKHLDHLLNCIMDMVEKTRRSLTVLRRCQE. The segment at 337-383 is nervy homology region 2 (NHR2); it reads QEEMIDHRLTDREWAEEWKHLDHLLNCIMDMVEKTRRSLTVLRRCQE. The segment at 401–423 is disordered; that stretch reads DLKKGGGSSSSHSRQQSPVNPDP. Ser-417 is modified (phosphoserine). The tract at residues 443 to 492 is nervy homology region 3 (NHR3); it reads EEIWKKAEEAVNEVKRQAMTELQKAVSEAERKAHDMITTERAKMERTVAE. The Zn(2+) site is built by Cys-515, Cys-518, Cys-526, Cys-529, Cys-535, Cys-539, His-547, and Cys-551. The segment at 515–551 adopts an MYND-type zinc-finger fold; that stretch reads CWNCGRKASETCSGCNTARYCGSFCQHKDWEKHHHIC. Positions 557–576 are enriched in polar residues; sequence AQQQGDTPAVSSSVTPNSGA. The interval 557-604 is disordered; that stretch reads AQQQGDTPAVSSSVTPNSGAGSPMDTPPAATPRSTTPGTPSTIETTPR. Low complexity predominate over residues 587–604; the sequence is TPRSTTPGTPSTIETTPR.

This sequence belongs to the CBFA2T family. In terms of assembly, homooligomer. Homotetramerization is mediated by nervy homology region 2 (NRH2). Can interact with CBFA2T2 and CBFA2T3; heterotetramerization between members of the CBFA2T family is proposed. Interacts with TCF12, SIN3A, HDAC1, HDAC2, HDAC3, NCOR1, NCOR2. Interacts with ATN1 (via its N-terminus); the interaction enhances the transcriptional repression. Interacts (via its N-terminus) with ZBTB16; the interaction increases the transcription repression activity of ZBTB16. AML1-MTG8/ETO fusion protein interacts with CBFB. AML1-MTG8/ETO is part of a stable transcription factor complex AETFC in leukemic cells; AETFC formation seems to be involved in recruitment of EP300. AML1-MTG8/ETO nervy homology region 2-mediated oligomerization is proposed to be homotypic, required for AML1-MTG8/ETO-mediated transformation of primary hematopoietic cells and is required for AML1-MTG8/ETO interaction with TCF12. In terms of tissue distribution, most abundantly expressed in brain. Lower levels in lung, heart, testis and ovary.

Its subcellular location is the nucleus. Functionally, transcriptional corepressor which facilitates transcriptional repression via its association with DNA-binding transcription factors and recruitment of other corepressors and histone-modifying enzymes. Can repress the expression of MMP7 in a ZBTB33-dependent manner. Can repress transactivation mediated by TCF12. Acts as a negative regulator of adipogenesis. The AML1-MTG8/ETO fusion protein frequently found in leukemic cells is involved in leukemogenesis and contributes to hematopoietic stem/progenitor cell self-renewal. The polypeptide is Protein CBFA2T1 (RUNX1T1) (Homo sapiens (Human)).